We begin with the raw amino-acid sequence, 1112 residues long: cGMP-inhibited 3',5'-cyclic phosphodiesterase 3B (1112 aa).

Residues 1–10 (MRRDERDAKA) are compositionally biased toward basic and acidic residues. The interval 1–25 (MRRDERDAKAMRSLQPPDGAGSPPE) is interaction with RAPGEF3. Residues 1–26 (MRRDERDAKAMRSLQPPDGAGSPPES) are disordered. S13 is modified (phosphoserine). 6 helical membrane-spanning segments follow: residues 88-108 (FVLA…AAWL), 117-137 (HSLS…CFLT), 152-172 (WWLL…WQWW), 192-212 (AAAG…TLAH), 220-240 (VLVL…LGSL), and 247-267 (LLSG…DHFF). Position 295 is a phosphoserine; by PKB/AKT1 or PKB/AKT2 (S295). Phosphoserine occurs at positions 296 and 442. The segment at 418–471 (EKGDRKLNKGLNRNSLPTPQLRRSSGTSGLLPVEQSSRWDRNNGKRPHQEFGIS) is disordered. Residues 428 to 445 (LNRNSLPTPQLRRSSGTS) are compositionally biased toward polar residues. Residues 436–460 (PQLRRSSGTSGLLPVEQSSRWDRNN) are interaction with PIK3R6. Residues 454–466 (SRWDRNNGKRPHQ) show a composition bias toward basic and acidic residues. Positions 651–1079 (TNIEQEVSLD…KIWKEIVEEE (429 aa)) constitute a PDEase domain. H737 acts as the Proton donor in catalysis. Residue H737 participates in AMP binding. Residues H741, H821, D822, and D937 each coordinate Mg(2+). The AMP site is built by D822, D937, and Q988. 2 stretches are compositionally biased toward acidic residues: residues 1017–1041 (EEDN…EEME) and 1103–1112 (QVIEEADEEE). Disordered regions lie at residues 1017–1051 (EEDN…PPRR) and 1092–1112 (ENSS…DEEE).

The protein belongs to the cyclic nucleotide phosphodiesterase family. PDE3 subfamily. In terms of assembly, homodimer. Interacts with PIK3CG; regulates PDE3B activity and thereby cAMP levels in cells. Interacts with RAPGEF3 and PIK3R6; form a signaling complex that regulates phosphatidylinositol 3-kinase gamma in angiogenesis. Interacts with ABHD15; this interaction regulates PDE3B's stability and expression and, thereby, impacts the antilipolytic action of insulin. Mg(2+) is required as a cofactor. Mn(2+) serves as cofactor. Post-translationally, phosphorylation at Ser-295 mediates insulin-induced activation of PDE3B. As to expression, abundant in adipose tissues.

Its subcellular location is the membrane. The enzyme catalyses a nucleoside 3',5'-cyclic phosphate + H2O = a nucleoside 5'-phosphate + H(+). It carries out the reaction 3',5'-cyclic AMP + H2O = AMP + H(+). It catalyses the reaction 3',5'-cyclic GMP + H2O = GMP + H(+). Inhibited by cGMP. Functionally, cyclic nucleotide phosphodiesterase with a dual-specificity for the second messengers cAMP and cGMP, which are key regulators of many important physiological process. Regulates angiogenesis by inhibiting the cAMP-dependent guanine nucleotide exchange factor RAPGEF3 and downstream phosphatidylinositol 3-kinase gamma-mediated signaling. Controls cardiac contractility by reducing cAMP concentration in cardiocytes. The polypeptide is cGMP-inhibited 3',5'-cyclic phosphodiesterase 3B (Homo sapiens (Human)).